The following is a 255-amino-acid chain: Protein patched homolog 2 (255 aa).

Topologically, residues Ser-1–Asp-197 are extracellular. Residues Asn-147 and Asn-175 are each glycosylated (N-linked (GlcNAc...) asparagine). Residues Val-198–Met-218 traverse the membrane as a helical segment. The region spanning Ser-199–Ser-255 is the SSD domain. Over Leu-219–Gln-227 the chain is Cytoplasmic. The chain crosses the membrane as a helical span at residues Gly-228–Leu-248. Residues Cys-249–Ser-255 are Extracellular-facing.

This sequence belongs to the patched family. As to expression, in the eye, detected in neural retina, iris, retinal pigment epithelium, but not in lens.

It localises to the membrane. Functionally, may act as a receptor for sonic hedgehog (SHH). The protein is Protein patched homolog 2 (PTC2) of Cynops pyrrhogaster (Japanese fire-bellied newt).